A 303-amino-acid chain; its full sequence is Monoglyceride lipase (303 aa).

T10 carries the phosphothreonine modification. Y58 carries the 3'-nitrotyrosine modification. The active-site Nucleophile is S122. Position 189 is a phosphoserine (S189). Residues D239 and H269 each act as charge relay system in the active site.

It belongs to the AB hydrolase superfamily. Monoacylglycerol lipase family. In terms of assembly, homodimer. In terms of tissue distribution, ubiquitous. Highly expressed in adipose tissue, adrenal gland, ovary, heart, spleen, lung, skeletal muscle, kidney and testis. Highly expressed throughout the brain.

It is found in the cytoplasm. It localises to the cytosol. The protein localises to the membrane. The enzyme catalyses Hydrolyzes glycerol monoesters of long-chain fatty acids.. It catalyses the reaction a 1-acylglycerol + H2O = glycerol + a fatty acid + H(+). The catalysed reaction is a 2-acylglycerol + H2O = glycerol + a fatty acid + H(+). It carries out the reaction 1-octanoylglycerol + H2O = octanoate + glycerol + H(+). The enzyme catalyses 2-(5Z,8Z,11Z,14Z-eicosatetraenoyl)-glycerol + H2O = glycerol + (5Z,8Z,11Z,14Z)-eicosatetraenoate + H(+). It catalyses the reaction 1-decanoylglycerol + H2O = decanoate + glycerol + H(+). The catalysed reaction is 1-dodecanoylglycerol + H2O = dodecanoate + glycerol + H(+). It carries out the reaction 1-tetradecanoylglycerol + H2O = tetradecanoate + glycerol + H(+). The enzyme catalyses 2-hexadecanoylglycerol + H2O = glycerol + hexadecanoate + H(+). It catalyses the reaction 1-(9Z-octadecenoyl)-glycerol + H2O = glycerol + (9Z)-octadecenoate + H(+). The catalysed reaction is 2-(9Z-octadecenoyl)-glycerol + H2O = glycerol + (9Z)-octadecenoate + H(+). It carries out the reaction 2-(9Z,12Z-octadecadienoyl)-glycerol + H2O = (9Z,12Z)-octadecadienoate + glycerol + H(+). The enzyme catalyses 1-(5Z,8Z,11Z,14Z-eicosatetraenoyl)-glycerol + H2O = glycerol + (5Z,8Z,11Z,14Z)-eicosatetraenoate + H(+). It catalyses the reaction 1-(9Z,12Z-octadecadienoyl)-glycerol + H2O = (9Z,12Z)-octadecadienoate + glycerol + H(+). The catalysed reaction is 1-hexadecanoylglycerol + H2O = glycerol + hexadecanoate + H(+). It carries out the reaction 1-octadecanoylglycerol + H2O = octadecanoate + glycerol + H(+). The enzyme catalyses prostaglandin E2 1-glyceryl ester + H2O = prostaglandin E2 + glycerol + H(+). It catalyses the reaction prostaglandin D2-1-glycerol ester + H2O = prostaglandin D2 + glycerol + H(+). The catalysed reaction is 2-glyceryl-15-deoxy-Delta(12,14)-prostaglandin J2 + H2O = 15-deoxy-Delta(12,14)-prostaglandin J2 + glycerol + H(+). It carries out the reaction prostaglandin F2alpha 1-glyceryl ester + H2O = prostaglandin F2alpha + glycerol + H(+). It participates in glycerolipid metabolism; triacylglycerol degradation. Converts monoacylglycerides to free fatty acids and glycerol. Hydrolyzes the endocannabinoid 2-arachidonoylglycerol, and thereby contributes to the regulation of endocannabinoid signaling, nociperception and perception of pain. Regulates the levels of fatty acids that serve as signaling molecules and promote cancer cell migration, invasion and tumor growth. The polypeptide is Monoglyceride lipase (Rattus norvegicus (Rat)).